A 140-amino-acid chain; its full sequence is 3-hydroxyacyl-[acyl-carrier-protein] dehydratase FabZ (140 aa).

Histidine 48 is an active-site residue.

This sequence belongs to the thioester dehydratase family. FabZ subfamily.

Its subcellular location is the cytoplasm. It carries out the reaction a (3R)-hydroxyacyl-[ACP] = a (2E)-enoyl-[ACP] + H2O. In terms of biological role, involved in unsaturated fatty acids biosynthesis. Catalyzes the dehydration of short chain beta-hydroxyacyl-ACPs and long chain saturated and unsaturated beta-hydroxyacyl-ACPs. The protein is 3-hydroxyacyl-[acyl-carrier-protein] dehydratase FabZ of Pelotomaculum thermopropionicum (strain DSM 13744 / JCM 10971 / SI).